The primary structure comprises 368 residues: MSETAKKVIVGMSGGVDSSVSAWLLQQQGYQVEGLFMKNWEEDDGEEYCTAAADLADAQAVCDKLGIELHTVNFAAEYWDNVFELFLAEYKAGRTPNPDILCNKEIKFKAFLEFAAEDLGADYIATGHYVRRADVDGKSRLLRGLDSNKDQSYFLYTLSHEQIAQSLFPVGELEKPQVRKIAEDLGLVTAKKKDSTGICFIGERKFREFLGRYLPAQPGKIITVDGDEIGEHQGLMYHTLGQRKGLGIGGTKEGTEEPWYVVDKDVENNILVVAQGHEHPRLMSVGLIAQQLHWVDREPFTGTMRCTVKTRYRQTDIPCTVKALDDDRIEVIFDEPVAAVTPGQSAVFYNGEVCLGGGIIEQRLPLPV.

ATP contacts are provided by residues 11–18 (GMSGGVDS) and methionine 37. Residues 97–99 (NPD) are interaction with target base in tRNA. Cysteine 102 (nucleophile) is an active-site residue. An intrachain disulfide couples cysteine 102 to cysteine 199. Glycine 127 contacts ATP. Residues 149–151 (KDQ) are interaction with tRNA. Cysteine 199 (cysteine persulfide intermediate) is an active-site residue. Residues 311–312 (RY) are interaction with tRNA.

Belongs to the MnmA/TRMU family. Interacts with TusE.

The protein localises to the cytoplasm. The enzyme catalyses S-sulfanyl-L-cysteinyl-[protein] + uridine(34) in tRNA + AH2 + ATP = 2-thiouridine(34) in tRNA + L-cysteinyl-[protein] + A + AMP + diphosphate + H(+). Functionally, catalyzes the 2-thiolation of uridine at the wobble position (U34) of tRNA(Lys), tRNA(Glu) and tRNA(Gln), leading to the formation of s(2)U34, the first step of tRNA-mnm(5)s(2)U34 synthesis. Sulfur is provided by IscS, via a sulfur-relay system. Binds ATP and its substrate tRNAs. This Escherichia coli O139:H28 (strain E24377A / ETEC) protein is tRNA-specific 2-thiouridylase MnmA.